Reading from the N-terminus, the 826-residue chain is Eukaryotic translation initiation factor 3 subunit C (826 aa).

Disordered regions lie at residues 1-71 (MSRF…GKGA) and 205-227 (SGGD…PRAK). Over residues 10-20 (DSDDSSSDEDL) the composition is skewed to acidic residues. Residues 21–30 (YGSGSESGSD) are compositionally biased toward low complexity. Positions 32–65 (SQDEQDGGDDNDDDMSDDSMFADDSDDDSDDDED) are enriched in acidic residues. Residues 218 to 227 (KEDKPKPRAK) show a composition bias toward basic and acidic residues. One can recognise a PCI domain in the interval 605 to 779 (FHTHINLELL…NSVVFTQAVQ (175 aa)).

It belongs to the eIF-3 subunit C family. As to quaternary structure, component of the eukaryotic translation initiation factor 3 (eIF-3) complex.

Its subcellular location is the cytoplasm. Its function is as follows. Component of the eukaryotic translation initiation factor 3 (eIF-3) complex, which is involved in protein synthesis of a specialized repertoire of mRNAs and, together with other initiation factors, stimulates binding of mRNA and methionyl-tRNAi to the 40S ribosome. The eIF-3 complex specifically targets and initiates translation of a subset of mRNAs involved in cell proliferation. This Yarrowia lipolytica (strain CLIB 122 / E 150) (Yeast) protein is Eukaryotic translation initiation factor 3 subunit C.